A 491-amino-acid polypeptide reads, in one-letter code: Probable malate:quinone oxidoreductase (491 aa).

It belongs to the MQO family. It depends on FAD as a cofactor.

It catalyses the reaction (S)-malate + a quinone = a quinol + oxaloacetate. It participates in carbohydrate metabolism; tricarboxylic acid cycle; oxaloacetate from (S)-malate (quinone route): step 1/1. The chain is Probable malate:quinone oxidoreductase from Actinobacillus pleuropneumoniae serotype 7 (strain AP76).